The sequence spans 613 residues: Alkyldihydroxyacetonephosphate synthase (613 aa).

Residues 126–307 (IDRPPDAVIL…TEAVVKIERL (182 aa)) form the FAD-binding PCMH-type domain. FAD-binding positions include 158–164 (PFGGGTN), 228–234 (DSYAYST), 241–244 (ARGS), and 291–297 (EGAFGLV). R437 contributes to the substrate binding site. The Proton donor/acceptor role is filled by Y498. The interval 534–536 (HHH) is important for enzyme activity. The disordered stretch occupies residues 572-593 (NPGKLLPSPPSEKETPKATQAR). Positions 611–613 (AHL) match the Microbody targeting signal motif.

It belongs to the FAD-binding oxidoreductase/transferase type 4 family. In terms of assembly, homodimer. It depends on FAD as a cofactor.

The protein resides in the peroxisome. The catalysed reaction is a long chain fatty alcohol + a 1-acylglycerone 3-phosphate = a 1-O-alkylglycerone 3-phosphate + a long-chain fatty acid + H(+). Its pathway is glycerolipid metabolism; ether lipid biosynthesis. Its function is as follows. Catalyzes the exchange of an acyl for a long-chain alkyl group and the formation of the ether bond in the biosynthesis of ether phospholipids. This Trypanosoma brucei brucei protein is Alkyldihydroxyacetonephosphate synthase.